The chain runs to 513 residues: U3 small nucleolar RNA-associated protein 15 (513 aa).

WD repeat units lie at residues 37–78 (KEHN…KTFS), 79–118 (RFKDVVYSASFRSDGKLLCAGDATGLVSVYDSYNPRTILL), 124–162 (THPTHVTKFHTQDNKILATASDDRVTRLWDISNAYEPQL), 166–206 (GATD…STPI), 210–247 (NHDQPVENVIAVSPTQIVSCGGNNFKVWDLTSNKKLYE), and 250–294 (NFNK…QVKF). The segment at 332 to 354 (KKKEKRSSDKENAPASFNKNAKS) is disordered.

Interacts with snoRNA U3. Interacts with MPP10. Component of the ribosomal small subunit (SSU) processome composed of at least 40 protein subunits and snoRNA U3. In the absence of snoRNA3, forms a complex with other t-UTPs. This complex can associate with pre-18S ribosomal RNAs.

It is found in the nucleus. It localises to the nucleolus. Its function is as follows. Involved in nucleolar processing of pre-18S ribosomal RNA. Required for optimal pre-ribosomal RNA transcription by RNA polymerase I together with a subset of U3 proteins required for transcription (t-UTPs). This chain is U3 small nucleolar RNA-associated protein 15 (UTP15), found in Saccharomyces cerevisiae (strain ATCC 204508 / S288c) (Baker's yeast).